Consider the following 222-residue polypeptide: Thiamine-phosphate synthase (222 aa).

Residues 44–48 and asparagine 75 contribute to the 4-amino-2-methyl-5-(diphosphooxymethyl)pyrimidine site; that span reads QVRMK. Mg(2+) contacts are provided by aspartate 76 and aspartate 95. A 4-amino-2-methyl-5-(diphosphooxymethyl)pyrimidine-binding site is contributed by threonine 114. 140–142 contributes to the 2-[(2R,5Z)-2-carboxy-4-methylthiazol-5(2H)-ylidene]ethyl phosphate binding site; sequence SRS. Lysine 143 provides a ligand contact to 4-amino-2-methyl-5-(diphosphooxymethyl)pyrimidine. Glycine 171 serves as a coordination point for 2-[(2R,5Z)-2-carboxy-4-methylthiazol-5(2H)-ylidene]ethyl phosphate.

Belongs to the thiamine-phosphate synthase family. Mg(2+) serves as cofactor.

It carries out the reaction 2-[(2R,5Z)-2-carboxy-4-methylthiazol-5(2H)-ylidene]ethyl phosphate + 4-amino-2-methyl-5-(diphosphooxymethyl)pyrimidine + 2 H(+) = thiamine phosphate + CO2 + diphosphate. The catalysed reaction is 2-(2-carboxy-4-methylthiazol-5-yl)ethyl phosphate + 4-amino-2-methyl-5-(diphosphooxymethyl)pyrimidine + 2 H(+) = thiamine phosphate + CO2 + diphosphate. The enzyme catalyses 4-methyl-5-(2-phosphooxyethyl)-thiazole + 4-amino-2-methyl-5-(diphosphooxymethyl)pyrimidine + H(+) = thiamine phosphate + diphosphate. Its pathway is cofactor biosynthesis; thiamine diphosphate biosynthesis; thiamine phosphate from 4-amino-2-methyl-5-diphosphomethylpyrimidine and 4-methyl-5-(2-phosphoethyl)-thiazole: step 1/1. In terms of biological role, condenses 4-methyl-5-(beta-hydroxyethyl)thiazole monophosphate (THZ-P) and 2-methyl-4-amino-5-hydroxymethyl pyrimidine pyrophosphate (HMP-PP) to form thiamine monophosphate (TMP). The sequence is that of Thiamine-phosphate synthase from Anaeromyxobacter dehalogenans (strain 2CP-C).